The primary structure comprises 215 residues: MLQVYLVRHGETEWNAARRIQGQSDSPLTANGEHQARLVAQRVSKQGITHVITSDLGRTRRTAQIIAEACGCEVINDPRLRELHMGVLEERLIDSLTPQEEQWRKQMVDGTADGRIPQGESMSELGDRMREALESCLMLPEGSKPLIVSHGIALGCLISTVLGLPAYAERRLRLRNCSLSRVDHQQSPWLASGWIVETAGDVTHLDTPALDELQR.

Residues 8–15 (RHGETEWN), 21–22 (QG), Arg-58, Arg-60, 82–85 (ELHM), and 151–152 (GI) each bind substrate. The Tele-phosphohistidine intermediate role is filled by His-9. Glu-82 serves as the catalytic Proton donor/acceptor.

The protein belongs to the phosphoglycerate mutase family. GpmB subfamily.

It catalyses the reaction (2R)-2-phosphoglycerate = (2R)-3-phosphoglycerate. Its pathway is carbohydrate degradation; glycolysis; pyruvate from D-glyceraldehyde 3-phosphate: step 3/5. The polypeptide is Probable phosphoglycerate mutase GpmB (Serratia proteamaculans (strain 568)).